The sequence spans 273 residues: Large ribosomal subunit protein uL2 (273 aa).

Residues 224–264 form a disordered region; the sequence is AMNPVDHPHGGGEGRNFGKHPVTPWGIQTKGKKTRKNKRTD. A compositionally biased stretch (basic residues) spans 253–264; the sequence is KGKKTRKNKRTD.

This sequence belongs to the universal ribosomal protein uL2 family. Part of the 50S ribosomal subunit. Forms a bridge to the 30S subunit in the 70S ribosome.

In terms of biological role, one of the primary rRNA binding proteins. Required for association of the 30S and 50S subunits to form the 70S ribosome, for tRNA binding and peptide bond formation. It has been suggested to have peptidyltransferase activity; this is somewhat controversial. Makes several contacts with the 16S rRNA in the 70S ribosome. In Buchnera aphidicola subsp. Acyrthosiphon pisum (strain 5A), this protein is Large ribosomal subunit protein uL2.